The chain runs to 500 residues: MSNMQKKTDVILIGAGIMSATLGSLLKELAPEWEIKMFEKLEGAGEESSNEWNNAGTGHSALCELNYTSEKPDGSIDIKKALKINEQFQLSRQFWSYLVNSNLIRNPQKFIMPIPHMSLVQGEKNVTFLKKRFKALSNIPLFQGMEFSDDPEKLKEWMPLIMEGRTSNEPIAATKMESGTDVNFGALTRMLFEHLQNKNVELNYKHSVENIKRMKNGLWEVKVHDMNNGKIEYHTAKFVFIGAGGGSLPLLQKTGIPESKHIGGFPVSGLFMVCNNPKVIEKHHAKVYGKAKVGAPPMSVPHLDTRYIDNKKTLLFGPFAGFSPKFLKTGSNLDLLGSVKPNNVLTMLAAGVKEMALTKYLIQQVMLSNEKRIEELREFIPNAKGEDWDVVVAGQRVQVIKDTETGGKGTLQFGTEVVSAADGSIAALLGASPGASTAVNVMLEVLEKCFPQYMEKWEEKIKHMIPSYGISLVENPKLFQEIHTSTSKTLGLSKKEAVYS.

The protein belongs to the MQO family. Requires FAD as cofactor.

The enzyme catalyses (S)-malate + a quinone = a quinol + oxaloacetate. The protein operates within carbohydrate metabolism; tricarboxylic acid cycle; oxaloacetate from (S)-malate (quinone route): step 1/1. The protein is Probable malate:quinone oxidoreductase of Bacillus cytotoxicus (strain DSM 22905 / CIP 110041 / 391-98 / NVH 391-98).